Here is a 153-residue protein sequence, read N- to C-terminus: uncharacterized protein (153 aa).

This is an uncharacterized protein from Bacillus subtilis (strain 168).